Reading from the N-terminus, the 306-residue chain is Bifunctional protein FolD 2 (306 aa).

Residues 169–171 (GHS) and I235 each bind NADP(+).

It belongs to the tetrahydrofolate dehydrogenase/cyclohydrolase family. Homodimer.

The enzyme catalyses (6R)-5,10-methylene-5,6,7,8-tetrahydrofolate + NADP(+) = (6R)-5,10-methenyltetrahydrofolate + NADPH. It carries out the reaction (6R)-5,10-methenyltetrahydrofolate + H2O = (6R)-10-formyltetrahydrofolate + H(+). Its pathway is one-carbon metabolism; tetrahydrofolate interconversion. Catalyzes the oxidation of 5,10-methylenetetrahydrofolate to 5,10-methenyltetrahydrofolate and then the hydrolysis of 5,10-methenyltetrahydrofolate to 10-formyltetrahydrofolate. In Mesorhizobium japonicum (strain LMG 29417 / CECT 9101 / MAFF 303099) (Mesorhizobium loti (strain MAFF 303099)), this protein is Bifunctional protein FolD 2.